Here is a 256-residue protein sequence, read N- to C-terminus: 5-oxoprolinase subunit A (256 aa).

It belongs to the LamB/PxpA family. As to quaternary structure, forms a complex composed of PxpA, PxpB and PxpC.

It catalyses the reaction 5-oxo-L-proline + ATP + 2 H2O = L-glutamate + ADP + phosphate + H(+). Catalyzes the cleavage of 5-oxoproline to form L-glutamate coupled to the hydrolysis of ATP to ADP and inorganic phosphate. The polypeptide is 5-oxoprolinase subunit A (Alkaliphilus metalliredigens (strain QYMF)).